The following is a 216-amino-acid chain: Probable nicotinate-nucleotide adenylyltransferase (216 aa).

This sequence belongs to the NadD family.

The catalysed reaction is nicotinate beta-D-ribonucleotide + ATP + H(+) = deamido-NAD(+) + diphosphate. It participates in cofactor biosynthesis; NAD(+) biosynthesis; deamido-NAD(+) from nicotinate D-ribonucleotide: step 1/1. Its function is as follows. Catalyzes the reversible adenylation of nicotinate mononucleotide (NaMN) to nicotinic acid adenine dinucleotide (NaAD). The protein is Probable nicotinate-nucleotide adenylyltransferase of Shewanella baltica (strain OS195).